The primary structure comprises 112 residues: Large ribosomal subunit protein bL17 (112 aa).

Belongs to the bacterial ribosomal protein bL17 family. As to quaternary structure, part of the 50S ribosomal subunit. Contacts protein L32.

The polypeptide is Large ribosomal subunit protein bL17 (Desulfitobacterium hafniense (strain DSM 10664 / DCB-2)).